We begin with the raw amino-acid sequence, 95 residues long: Small ubiquitin-related modifier 4 (95 aa).

One can recognise a Ubiquitin-like domain in the interval His-17–Tyr-95. Gly-93 is covalently cross-linked (Glycyl lysine isopeptide (Gly-Lys) (interchain with K-? in acceptor proteins)). Positions Val-94–Tyr-95 are excised as a propeptide.

Belongs to the ubiquitin family. SUMO subfamily. As to quaternary structure, interacts with SAE2. Covalently attached to a number of proteins.

Ubiquitin-like protein which can be covalently attached to target lysines as a monomer. Does not seem to be involved in protein degradation and may modulate protein subcellular localization, stability or activity. Upon oxidative stress, conjugates to various anti-oxidant enzymes, chaperones, and stress defense proteins. May also conjugate to NFKBIA, TFAP2A and FOS, negatively regulating their transcriptional activity, and to NR3C1, positively regulating its transcriptional activity. Covalent attachment to its substrates requires prior activation by the E1 complex SAE1-SAE2 and linkage to the E2 enzyme UBE2I. This Sus scrofa (Pig) protein is Small ubiquitin-related modifier 4 (SUMO4).